Reading from the N-terminus, the 687-residue chain is Putative pentatricopeptide repeat-containing protein At3g15930 (687 aa).

13 PPR repeats span residues 98 to 132 (DVVVWNNMIKGWSKVDCDGEGVRLYLNMLKEGVTP), 133 to 168 (DSHTFPFLLNGLKRDGGALACGKKLHCHVVKFGLGS), 169 to 199 (NLYVQNALVKMYSLCGLMDMARGVFDRRCKE), 200 to 234 (DVFSWNLMISGYNRMKEYEESIELLVEMERNLVSP), 235 to 269 (TSVTLLLVLSACSKVKDKDLCKRVHEYVSECKTEP), 270 to 304 (SLRLENALVNAYAACGEMDIAVRIFRSMKARDVIS), 305 to 331 (WTSIVKGYVERGNLKLARTYFDQMPVR), 332 to 366 (DRISWTIMIDGYLRAGCFNESLEIFREMQSAGMIP), 367 to 401 (DEFTMVSVLTACAHLGSLEIGEWIKTYIDKNKIKN), 402 to 432 (DVVVGNALIDMYFKCGCSEKAQKVFHDMDQR), 433 to 467 (DKFTWTAMVVGLANNGQGQEAIKVFFQMQDMSIQP), 468 to 498 (DDITYLGVLSACNHSGMVDQARKFFAKMRSD), and 504 to 534 (SLVHYGCMVDMLGRAGLVKEAYEILRKMPMN). The segment at 539-614 (VWGALLGASR…TPGFSLIEVN (76 aa)) is type E motif. The segment at 615–645 (GFAHEFVAGDKSHLQSEEIYMKLEELAQEST) is type E(+) motif.

The protein belongs to the PPR family. PCMP-E subfamily.

The protein is Putative pentatricopeptide repeat-containing protein At3g15930 (PCMP-E51) of Arabidopsis thaliana (Mouse-ear cress).